The following is a 92-amino-acid chain: Beta-2-microglobulin (92 aa).

In terms of domain architecture, Ig-like C1-type spans 2–91 (PQIQVYTRHP…VSMKEPKTVN (90 aa)). Cys22 and Cys77 are disulfide-bonded.

It belongs to the beta-2-microglobulin family. As to quaternary structure, heterodimer of an alpha chain and a beta chain. Beta-2-microglobulin is the beta-chain of major histocompatibility complex class I molecules.

Its subcellular location is the secreted. Its function is as follows. Component of the class I major histocompatibility complex (MHC). Involved in the presentation of peptide antigens to the immune system. This is Beta-2-microglobulin (B2m) from Mus caroli (Ryukyu mouse).